The sequence spans 506 residues: UDP-N-acetylmuramoyl-L-alanyl-D-glutamate--2,6-diaminopimelate ligase (506 aa).

A UDP-N-acetyl-alpha-D-muramoyl-L-alanyl-D-glutamate-binding site is contributed by Ser38. 124–130 (GTNGKTS) lines the ATP pocket. UDP-N-acetyl-alpha-D-muramoyl-L-alanyl-D-glutamate-binding positions include 166-167 (TT), Ser193, and Arg201. Lys233 is subject to N6-carboxylysine. Residues Arg401, 425-428 (DNPR), Gly477, and Glu481 contribute to the meso-2,6-diaminopimelate site. The Meso-diaminopimelate recognition motif motif lies at 425–428 (DNPR).

Belongs to the MurCDEF family. MurE subfamily. Mg(2+) serves as cofactor. In terms of processing, carboxylation is probably crucial for Mg(2+) binding and, consequently, for the gamma-phosphate positioning of ATP.

It localises to the cytoplasm. It carries out the reaction UDP-N-acetyl-alpha-D-muramoyl-L-alanyl-D-glutamate + meso-2,6-diaminopimelate + ATP = UDP-N-acetyl-alpha-D-muramoyl-L-alanyl-gamma-D-glutamyl-meso-2,6-diaminopimelate + ADP + phosphate + H(+). It participates in cell wall biogenesis; peptidoglycan biosynthesis. In terms of biological role, catalyzes the addition of meso-diaminopimelic acid to the nucleotide precursor UDP-N-acetylmuramoyl-L-alanyl-D-glutamate (UMAG) in the biosynthesis of bacterial cell-wall peptidoglycan. This Leptospira interrogans serogroup Icterohaemorrhagiae serovar copenhageni (strain Fiocruz L1-130) protein is UDP-N-acetylmuramoyl-L-alanyl-D-glutamate--2,6-diaminopimelate ligase.